Reading from the N-terminus, the 186-residue chain is Probable chorismate pyruvate-lyase (186 aa).

Substrate contacts are provided by R77, L115, and E174.

The protein belongs to the UbiC family.

The protein localises to the cytoplasm. The enzyme catalyses chorismate = 4-hydroxybenzoate + pyruvate. It functions in the pathway cofactor biosynthesis; ubiquinone biosynthesis. In terms of biological role, removes the pyruvyl group from chorismate, with concomitant aromatization of the ring, to provide 4-hydroxybenzoate (4HB) for the ubiquinone pathway. This chain is Probable chorismate pyruvate-lyase, found in Shewanella sp. (strain W3-18-1).